Here is a 266-residue protein sequence, read N- to C-terminus: Large ribosomal subunit protein uL4 (266 aa).

It belongs to the universal ribosomal protein uL4 family. In terms of assembly, part of the 50S ribosomal subunit.

One of the primary rRNA binding proteins, this protein initially binds near the 5'-end of the 23S rRNA. It is important during the early stages of 50S assembly. It makes multiple contacts with different domains of the 23S rRNA in the assembled 50S subunit and ribosome. Its function is as follows. Forms part of the polypeptide exit tunnel. The protein is Large ribosomal subunit protein uL4 of Sulfurisphaera tokodaii (strain DSM 16993 / JCM 10545 / NBRC 100140 / 7) (Sulfolobus tokodaii).